Reading from the N-terminus, the 385-residue chain is 8-amino-7-oxononanoate synthase (385 aa).

Position 21 (R21) interacts with substrate. G108–F109 is a pyridoxal 5'-phosphate binding site. A substrate-binding site is contributed by H133. Residues S179, H207, and T233 each coordinate pyridoxal 5'-phosphate. K236 is modified (N6-(pyridoxal phosphate)lysine). T352 contributes to the substrate binding site.

It belongs to the class-II pyridoxal-phosphate-dependent aminotransferase family. BioF subfamily. As to quaternary structure, homodimer. It depends on pyridoxal 5'-phosphate as a cofactor.

The enzyme catalyses 6-carboxyhexanoyl-[ACP] + L-alanine + H(+) = (8S)-8-amino-7-oxononanoate + holo-[ACP] + CO2. It functions in the pathway cofactor biosynthesis; biotin biosynthesis. Functionally, catalyzes the decarboxylative condensation of pimeloyl-[acyl-carrier protein] and L-alanine to produce 8-amino-7-oxononanoate (AON), [acyl-carrier protein], and carbon dioxide. In Salmonella enteritidis PT4 (strain P125109), this protein is 8-amino-7-oxononanoate synthase.